A 458-amino-acid polypeptide reads, in one-letter code: Phosphomethylpyrimidine synthase (458 aa).

Substrate-binding positions include Asn80, Met109, Tyr139, His175, Ser195 to Gly197, Asp236 to Arg239, and Glu275. Zn(2+) is bound at residue His279. Residue Tyr302 participates in substrate binding. A Zn(2+)-binding site is contributed by His343. The [4Fe-4S] cluster site is built by Cys423, Cys426, and Cys431.

It belongs to the ThiC family. [4Fe-4S] cluster serves as cofactor.

It catalyses the reaction 5-amino-1-(5-phospho-beta-D-ribosyl)imidazole + S-adenosyl-L-methionine = 4-amino-2-methyl-5-(phosphooxymethyl)pyrimidine + CO + 5'-deoxyadenosine + formate + L-methionine + 3 H(+). It participates in cofactor biosynthesis; thiamine diphosphate biosynthesis. Catalyzes the synthesis of the hydroxymethylpyrimidine phosphate (HMP-P) moiety of thiamine from aminoimidazole ribotide (AIR) in a radical S-adenosyl-L-methionine (SAM)-dependent reaction. The sequence is that of Phosphomethylpyrimidine synthase from Cyanothece sp. (strain PCC 7425 / ATCC 29141).